The sequence spans 315 residues: tRNA U34 carboxymethyltransferase (315 aa).

Carboxy-S-adenosyl-L-methionine is bound by residues lysine 79, tryptophan 93, lysine 98, glycine 117, 142–144 (DPS), 169–170 (VE), tyrosine 193, and arginine 307.

This sequence belongs to the class I-like SAM-binding methyltransferase superfamily. CmoB family. As to quaternary structure, homotetramer.

It carries out the reaction carboxy-S-adenosyl-L-methionine + 5-hydroxyuridine(34) in tRNA = 5-carboxymethoxyuridine(34) in tRNA + S-adenosyl-L-homocysteine + H(+). In terms of biological role, catalyzes carboxymethyl transfer from carboxy-S-adenosyl-L-methionine (Cx-SAM) to 5-hydroxyuridine (ho5U) to form 5-carboxymethoxyuridine (cmo5U) at position 34 in tRNAs. This is tRNA U34 carboxymethyltransferase from Helicobacter hepaticus (strain ATCC 51449 / 3B1).